The chain runs to 325 residues: Tartrate-resistant acid phosphatase type 5 (325 aa).

An N-terminal signal peptide occupies residues 1–21 (MDTWTLLLVLHTSLLLPWAEG). Residues asparagine 116 and asparagine 147 are each glycosylated (N-linked (GlcNAc...) asparagine).

In terms of assembly, exists either as monomer or, after proteolytic processing, as a dimer of two chains linked by disulfide bond(s). Fe cation serves as cofactor.

Its subcellular location is the lysosome. It carries out the reaction a phosphate monoester + H2O = an alcohol + phosphate. In Oryctolagus cuniculus (Rabbit), this protein is Tartrate-resistant acid phosphatase type 5 (ACP5).